Consider the following 265-residue polypeptide: MPLPVALQTRLAKRGILKHLEPEPEEEIIAEDYDDDPVDYEATRLEGLPPSWYKVFDPSCGLPYYWNADTDLVSWLSPHDPNSVVTKSAKKLRSSNADAEEKLDRSHDKSDRGHDKSDRSHEKLDRGHDKSDRGHDKSDRDRERGYDKVDRERERDRERDRDRGYDKADREEGKERRHHRREELAPYPKSKKAVSRKDEELDPMDPSSYSDAPRGTWSTGLPKRNEAKTGADTTAAGPLFQQRPYPSPGAVLRANAEASRTKQQD.

The WW domain occupies 46–80 (EGLPPSWYKVFDPSCGLPYYWNADTDLVSWLSPHD). Ser94 carries the post-translational modification Phosphoserine. The interval 94 to 265 (SSNADAEEKL…AEASRTKQQD (172 aa)) is disordered. The span at 99–175 (AEEKLDRSHD…DKADREEGKE (77 aa)) shows a compositional bias: basic and acidic residues. 15 tandem repeats follow at residues 104–110 (DRSHDKS), 111–117 (DRGHDKS), 118–124 (DRSHEKL), 125–131 (DRGHDKS), 132–138 (DRGHDKS), 139–140 (DR), 141–142 (DR), 143–144 (ER), 150–151 (DR), 152–153 (ER), 154–155 (ER), 156–157 (DR), 158–159 (ER), 160–161 (DR), and 162–163 (DR). The segment at 104–138 (DRSHDKSDRGHDKSDRSHEKLDRGHDKSDRGHDKS) is 5 X 7 AA approximate tandem repeats of D-R-[SG]-H-D-K-S. The segment at 139–144 (DRDRER) is 3 X 2 AA tandem repeats of [DE]-R. Positions 150 to 163 (DRERERDRERDRDR) are 7 X 2 AA tandem repeats of [DE]-R. An important for interaction with TXNL4A region spans residues 245-255 (YPSPGAVLRAN). Phosphoserine is present on Ser247.

As to quaternary structure, interacts with POU3F2/Brn-2, ATXN1, TXNL4A, HTT and AR. Interaction with ATXN1 correlates positively with the length of the polyglutamine tract. Interacts with RNA polymerase II large subunit in a phosphorylation-dependent manner. Forms a ternary complex with ATXN1 mutant and phosphorylated RNA polymerase II. Interacts (via C-terminus) with TXNL4A and CD2BP2. Interacts (via WW domain) with ATN1 and SF3B1, and may interact with additional splice factors. Interacts (via WW domain) with WBP11; Leading to reduce interaction between PQBP1 and TXNL4A. Interacts with CAPRIN1. Interacts with DDX1. Interacts with SFPQ. Interacts with KHSRP.

It is found in the nucleus. The protein localises to the nucleus speckle. Its subcellular location is the cytoplasmic granule. Functionally, intrinsically disordered protein that acts as a scaffold, and which is involved in different processes, such as pre-mRNA splicing, transcription regulation, innate immunity and neuron development. Interacts with splicing-related factors via the intrinsically disordered region and regulates alternative splicing of target pre-mRNA species. May suppress the ability of POU3F2 to transactivate the DRD1 gene in a POU3F2 dependent manner. Can activate transcription directly or via association with the transcription machinery. May be involved in ATXN1 mutant-induced cell death. The interaction with ATXN1 mutant reduces levels of phosphorylated RNA polymerase II large subunit. Involved in the assembly of cytoplasmic stress granule, possibly by participating in the transport of neuronal RNA granules. Also acts as an innate immune sensor of infection by retroviruses, by detecting the presence of reverse-transcribed DNA in the cytosol. Directly binds retroviral reverse-transcribed DNA in the cytosol and interacts with CGAS, leading to activate the cGAS-STING signaling pathway, triggering type-I interferon production. This is Polyglutamine-binding protein 1 (PQBP1) from Gorilla gorilla gorilla (Western lowland gorilla).